The following is a 795-amino-acid chain: Histone acetyltransferase KAT2A (795 aa).

Polar residues predominate over residues 1–18 (MADPAAQSSAQPRLQQAQ). The segment at 1–55 (MADPAAQSSAQPRLQQAQSSGPTGSNSNPGAGSSDPARPGLSQQQWSSQKKAQVR) is disordered. Low complexity predominate over residues 19–34 (SSGPTGSNSNPGAGSS). Positions 461 to 614 (VIGNSLSQKS…GATLMECELN (154 aa)) constitute an N-acetyltransferase domain. The active-site Proton donor/acceptor is the Glu-533. Residues 537–539 (CAV), 544–550 (QVKGYGT), and Tyr-575 each bind acetyl-CoA. Succinyl-CoA contacts are provided by residues 537–539 (CAV), 544–550 (QVKGYGT), and Tyr-575. The tract at residues 597–606 (LGYIKDYEGA) is loop 3. Residues 686–790 (KDPDLLYNML…KFFYFKLKEA (105 aa)) form the Bromo domain.

The protein belongs to the acetyltransferase family. GCN5 subfamily.

It localises to the nucleus. The protein localises to the chromosome. The protein resides in the cytoplasm. Its subcellular location is the cytoskeleton. It is found in the microtubule organizing center. It localises to the centrosome. The enzyme catalyses L-lysyl-[histone] + acetyl-CoA = N(6)-acetyl-L-lysyl-[histone] + CoA + H(+). It catalyses the reaction L-lysyl-[protein] + acetyl-CoA = N(6)-acetyl-L-lysyl-[protein] + CoA + H(+). The catalysed reaction is succinyl-CoA + L-lysyl-[protein] = N(6)-succinyl-L-lysyl-[protein] + CoA + H(+). It carries out the reaction glutaryl-CoA + L-lysyl-[protein] = N(6)-glutaryl-L-lysyl-[protein] + CoA + H(+). Protein lysine acyltransferase that can act as a acetyltransferase, glutaryltransferasesucc, succinyltransferase or malonyltransferase, depending on the context. Acts as a histone lysine succinyltransferase: catalyzes succinylation of histone H3 on 'Lys-79' (H3K79succ), with a maximum frequency around the transcription start sites of genes. Succinylation of histones gives a specific tag for epigenetic transcription activation. Association with the 2-oxoglutarate dehydrogenase complex, which provides succinyl-CoA, is required for histone succinylation. In different complexes, functions either as an acetyltransferase (HAT) or as a succinyltransferase: in the SAGA and ATAC complexes, acts as a histone acetyltransferase. Has significant histone acetyltransferase activity with core histones, but not with nucleosome core particles. Has a a strong preference for acetylation of H3 at 'Lys-9' (H3K9ac). Acetylation of histones gives a specific tag for epigenetic transcription activation. Also acetylates non-histone proteins, such as tbx5. Involved in heart and limb development by mediating acetylation of tbx5. Together with kat2b, required for growth and differentiation of craniofacial cartilage and bone by regulating acetylation of histone H3 at 'Lys-9' (H3K9ac). Also acts as a histone glutaryltransferase: catalyzes glutarylation of histone H4 on 'Lys-91' (H4K91glu), a mark that destabilizes nucleosomes by promoting dissociation of the H2A-H2B dimers from nucleosomes. The chain is Histone acetyltransferase KAT2A from Danio rerio (Zebrafish).